The primary structure comprises 426 residues: Putative zinc protease AlbF (426 aa).

Zn(2+) is bound at residue histidine 66. Catalysis depends on glutamate 69, which acts as the Proton acceptor. 2 residues coordinate Zn(2+): histidine 70 and glutamate 142.

Belongs to the peptidase M16 family. It depends on Zn(2+) as a cofactor.

In terms of biological role, required for production of the bacteriocin subtilosin. Could catalyze some step in the processing of presubtilosin. In Bacillus subtilis (strain 168), this protein is Putative zinc protease AlbF (albF).